Consider the following 180-residue polypeptide: NAD(P)H-quinone oxidoreductase subunit I, chloroplastic (180 aa).

2 4Fe-4S ferredoxin-type domains span residues 55-84 (GRIH…VDWK) and 95-124 (LNYS…MTEE). Residues Cys64, Cys67, Cys70, Cys74, Cys104, Cys107, Cys110, and Cys114 each coordinate [4Fe-4S] cluster.

This sequence belongs to the complex I 23 kDa subunit family. NDH is composed of at least 16 different subunits, 5 of which are encoded in the nucleus. [4Fe-4S] cluster is required as a cofactor.

The protein resides in the plastid. It localises to the chloroplast thylakoid membrane. It carries out the reaction a plastoquinone + NADH + (n+1) H(+)(in) = a plastoquinol + NAD(+) + n H(+)(out). It catalyses the reaction a plastoquinone + NADPH + (n+1) H(+)(in) = a plastoquinol + NADP(+) + n H(+)(out). Its function is as follows. NDH shuttles electrons from NAD(P)H:plastoquinone, via FMN and iron-sulfur (Fe-S) centers, to quinones in the photosynthetic chain and possibly in a chloroplast respiratory chain. The immediate electron acceptor for the enzyme in this species is believed to be plastoquinone. Couples the redox reaction to proton translocation, and thus conserves the redox energy in a proton gradient. This Nandina domestica (Heavenly bamboo) protein is NAD(P)H-quinone oxidoreductase subunit I, chloroplastic.